We begin with the raw amino-acid sequence, 219 residues long: Large ribosomal subunit protein uL16 (219 aa).

It belongs to the universal ribosomal protein uL16 family. As to quaternary structure, component of the large ribosomal subunit. Mature ribosomes consist of a small (40S) and a large (60S) subunit. The 40S subunit contains about 33 different proteins and 1 molecule of RNA (18S). The 60S subunit contains about 49 different proteins and 3 molecules of RNA (28S, 5.8S and 5S).

The protein is Large ribosomal subunit protein uL16 (RpL10) of Bombyx mandarina (Wild silk moth).